A 346-amino-acid polypeptide reads, in one-letter code: MSFRTIEWRDNKVVMIDQTRLPGEEVYNEYTDFQSVAEAIRGMIIRGAPAIGVAAAMGIALGAREIIADTHESFFRQLDNVCNVMARTRPTAVNLFWAIERMKRVAESHRDKDLNSIREILKAEAIRIEEEDLEICRAIGRNGAPLIKEGATILTHCNAGGLATAGYGTALGVIRAAHEAGKRIQVFADETRPWLQGARLTSWELMKDGIPVTLISDNMAGYFMRKGEIDVCVVGADRIAANGDTANKIGTYSVAVLAKENKIPFYVAAPVSTLDLSLKSGEDIPIEERHSREVTHLQGLPVAPEGVKVRNPAFDVTPARYIAGIITEKGVVRGDYEKELRALVGR.

Substrate contacts are provided by residues 46-48, R89, and Q196; that span reads RGA. The Proton donor role is filled by D237. Position 247-248 (247-248) interacts with substrate; the sequence is NK.

It belongs to the eIF-2B alpha/beta/delta subunits family. MtnA subfamily.

The enzyme catalyses 5-(methylsulfanyl)-alpha-D-ribose 1-phosphate = 5-(methylsulfanyl)-D-ribulose 1-phosphate. Its pathway is amino-acid biosynthesis; L-methionine biosynthesis via salvage pathway; L-methionine from S-methyl-5-thio-alpha-D-ribose 1-phosphate: step 1/6. Its function is as follows. Catalyzes the interconversion of methylthioribose-1-phosphate (MTR-1-P) into methylthioribulose-1-phosphate (MTRu-1-P). The polypeptide is Methylthioribose-1-phosphate isomerase (Geotalea uraniireducens (strain Rf4) (Geobacter uraniireducens)).